A 210-amino-acid polypeptide reads, in one-letter code: Thymidylate kinase (210 aa).

16 to 23 is a binding site for ATP; the sequence is GGDGVGKS.

Belongs to the thymidylate kinase family.

The enzyme catalyses dTMP + ATP = dTDP + ADP. Its function is as follows. Phosphorylation of dTMP to form dTDP in both de novo and salvage pathways of dTTP synthesis. This is Thymidylate kinase from Leifsonia xyli subsp. xyli (strain CTCB07).